The following is a 124-amino-acid chain: Translation initiation factor 5A (124 aa).

The segment at 27 to 53 (TSYSTSKPGKHGSAKARVEGTGVFDGQ) is disordered. Lys36 is modified (hypusine).

Belongs to the eIF-5A family.

The protein localises to the cytoplasm. Functions by promoting the formation of the first peptide bond. The polypeptide is Translation initiation factor 5A (Natronomonas pharaonis (strain ATCC 35678 / DSM 2160 / CIP 103997 / JCM 8858 / NBRC 14720 / NCIMB 2260 / Gabara) (Halobacterium pharaonis)).